A 332-amino-acid polypeptide reads, in one-letter code: Ribosomal RNA small subunit methyltransferase C (332 aa).

This sequence belongs to the methyltransferase superfamily. RsmC family. As to quaternary structure, monomer.

It localises to the cytoplasm. It carries out the reaction guanosine(1207) in 16S rRNA + S-adenosyl-L-methionine = N(2)-methylguanosine(1207) in 16S rRNA + S-adenosyl-L-homocysteine + H(+). Specifically methylates the guanine in position 1207 of 16S rRNA in the 30S particle. The chain is Ribosomal RNA small subunit methyltransferase C from Pseudomonas putida (strain GB-1).